The following is a 719-amino-acid chain: Fatty acid oxidation complex subunit alpha (719 aa).

The interval M1–A190 is enoyl-CoA hydratase/isomerase. D298 serves as a coordination point for substrate. The 3-hydroxyacyl-CoA dehydrogenase stretch occupies residues H313–A719. NAD(+) contacts are provided by residues M326, D345, V402 to E404, K409, and S431. H452 acts as the For 3-hydroxyacyl-CoA dehydrogenase activity in catalysis. Residue N455 coordinates NAD(+). N502 is a substrate binding site.

In the N-terminal section; belongs to the enoyl-CoA hydratase/isomerase family. This sequence in the C-terminal section; belongs to the 3-hydroxyacyl-CoA dehydrogenase family. As to quaternary structure, heterotetramer of two alpha chains (FadB) and two beta chains (FadA).

It carries out the reaction a (3S)-3-hydroxyacyl-CoA + NAD(+) = a 3-oxoacyl-CoA + NADH + H(+). The enzyme catalyses a (3S)-3-hydroxyacyl-CoA = a (2E)-enoyl-CoA + H2O. The catalysed reaction is a 4-saturated-(3S)-3-hydroxyacyl-CoA = a (3E)-enoyl-CoA + H2O. It catalyses the reaction (3S)-3-hydroxybutanoyl-CoA = (3R)-3-hydroxybutanoyl-CoA. It carries out the reaction a (3Z)-enoyl-CoA = a 4-saturated (2E)-enoyl-CoA. The enzyme catalyses a (3E)-enoyl-CoA = a 4-saturated (2E)-enoyl-CoA. It participates in lipid metabolism; fatty acid beta-oxidation. Its function is as follows. Involved in the aerobic and anaerobic degradation of long-chain fatty acids via beta-oxidation cycle. Catalyzes the formation of 3-oxoacyl-CoA from enoyl-CoA via L-3-hydroxyacyl-CoA. It can also use D-3-hydroxyacyl-CoA and cis-3-enoyl-CoA as substrate. In Psychrobacter arcticus (strain DSM 17307 / VKM B-2377 / 273-4), this protein is Fatty acid oxidation complex subunit alpha.